The chain runs to 317 residues: Olfactory receptor 1082 (317 aa).

Topologically, residues 1-26 are extracellular; the sequence is MESGNSTRRFSSFFLLGFTENPQLHF. An N-linked (GlcNAc...) asparagine glycan is attached at Asn-5. Residues 27–51 traverse the membrane as a helical segment; the sequence is LIFALFLSMYLVTVLGNLLIIMAII. Over 52 to 58 the chain is Cytoplasmic; sequence TQSHLHT. Residues 59 to 80 form a helical membrane-spanning segment; that stretch reads PMYFFLANLSFVDICFTSTTIP. The Extracellular segment spans residues 81 to 101; that stretch reads KMLVNIYTQSKSITYEDCISQ. Cys-98 and Cys-190 are joined by a disulfide. A helical membrane pass occupies residues 102–121; that stretch reads MCVFLVFAELGNFLLAVMAY. At 122 to 140 the chain is on the cytoplasmic side; sequence DRYVAXCHPLCYTVIVNHR. The chain crosses the membrane as a helical span at residues 141-159; it reads LCILLLLLSWVISIFHAFI. Residues 160–197 lie on the Extracellular side of the membrane; the sequence is QSLIVLQLTFCGDVKIPHFFCELNQLSQLTCSDNFPSH. Residues 198–220 traverse the membrane as a helical segment; it reads LIMNLVPVMLAAISFSGILYSYF. The Cytoplasmic segment spans residues 221-237; the sequence is KIVSSIHSISTVQGKYK. Residues 238–261 traverse the membrane as a helical segment; sequence AFSTCASHLSIVSLFYSTGLGVYV. The Extracellular portion of the chain corresponds to 262–273; it reads SSAVVQSSHSAA. A helical membrane pass occupies residues 274–293; the sequence is SASVMYTVVTPMLNPFIYSL. Residues 294 to 317 lie on the Cytoplasmic side of the membrane; the sequence is RNKDVKRALERLLEGNCKVHHWTG.

Belongs to the G-protein coupled receptor 1 family. In terms of tissue distribution, olfactory epithelium.

It localises to the cell membrane. Its function is as follows. Odorant receptor. The protein is Olfactory receptor 1082 (Olr1082) of Rattus norvegicus (Rat).